The sequence spans 276 residues: Large ribosomal subunit protein uL2c (276 aa).

The interval 221–276 (RGSVMNPVDHPHGGGEGRAPIGRSRPVTPWGKPALGQKTRKPKKQSNKLILRKRKK) is disordered. Positions 258–276 (KTRKPKKQSNKLILRKRKK) are enriched in basic residues.

Belongs to the universal ribosomal protein uL2 family. Part of the 50S ribosomal subunit.

It is found in the plastid. The protein localises to the chloroplast. The protein is Large ribosomal subunit protein uL2c (rpl2) of Stigeoclonium helveticum (Green alga).